Here is a 327-residue protein sequence, read N- to C-terminus: DNA repair and recombination protein RadA (327 aa).

An ATP-binding site is contributed by 113 to 120 (GEFGSGKS).

Belongs to the eukaryotic RecA-like protein family.

In terms of biological role, involved in DNA repair and in homologous recombination. Binds and assemble on single-stranded DNA to form a nucleoprotein filament. Hydrolyzes ATP in a ssDNA-dependent manner and promotes DNA strand exchange between homologous DNA molecules. This chain is DNA repair and recombination protein RadA, found in Ignicoccus hospitalis (strain KIN4/I / DSM 18386 / JCM 14125).